Consider the following 348-residue polypeptide: Sulfate/thiosulfate import ATP-binding protein CysA (348 aa).

The region spanning 3–237 is the ABC transporter domain; it reads IEIRNITKSF…PATPFVCQFI (235 aa). 35 to 42 lines the ATP pocket; that stretch reads GPSGCGKT.

It belongs to the ABC transporter superfamily. Sulfate/tungstate importer (TC 3.A.1.6) family. The complex is composed of two ATP-binding proteins (CysA), two transmembrane proteins (CysT and CysW) and a solute-binding protein (CysP).

It is found in the cell inner membrane. It carries out the reaction sulfate(out) + ATP + H2O = sulfate(in) + ADP + phosphate + H(+). It catalyses the reaction thiosulfate(out) + ATP + H2O = thiosulfate(in) + ADP + phosphate + H(+). Functionally, part of the ABC transporter complex CysAWTP involved in sulfate/thiosulfate import. Responsible for energy coupling to the transport system. In Methylococcus capsulatus (strain ATCC 33009 / NCIMB 11132 / Bath), this protein is Sulfate/thiosulfate import ATP-binding protein CysA.